A 178-amino-acid chain; its full sequence is Acireductone dioxygenase 1 (178 aa).

Residues H84, H86, E90, and H130 each contribute to the Fe(2+) site. Residues H84, H86, E90, and H130 each coordinate Ni(2+).

This sequence belongs to the acireductone dioxygenase (ARD) family. Requires Fe(2+) as cofactor. The cofactor is Ni(2+).

It is found in the cytoplasm. The protein localises to the nucleus. The catalysed reaction is 1,2-dihydroxy-5-(methylsulfanyl)pent-1-en-3-one + O2 = 4-methylsulfanyl-2-oxobutanoate + formate + 2 H(+). It carries out the reaction 1,2-dihydroxy-5-(methylsulfanyl)pent-1-en-3-one + O2 = 3-(methylsulfanyl)propanoate + CO + formate + 2 H(+). It functions in the pathway amino-acid biosynthesis; L-methionine biosynthesis via salvage pathway; L-methionine from S-methyl-5-thio-alpha-D-ribose 1-phosphate: step 5/6. Its function is as follows. Catalyzes 2 different reactions between oxygen and the acireductone 1,2-dihydroxy-3-keto-5-methylthiopentene (DHK-MTPene) depending upon the metal bound in the active site. Fe-containing acireductone dioxygenase (Fe-ARD) produces formate and 2-keto-4-methylthiobutyrate (KMTB), the alpha-ketoacid precursor of methionine in the methionine recycle pathway. Ni-containing acireductone dioxygenase (Ni-ARD) produces methylthiopropionate, carbon monoxide and formate, and does not lie on the methionine recycle pathway. In Coprinopsis cinerea (strain Okayama-7 / 130 / ATCC MYA-4618 / FGSC 9003) (Inky cap fungus), this protein is Acireductone dioxygenase 1.